Here is a 348-residue protein sequence, read N- to C-terminus: Dihydroorotase (348 aa).

Positions 14 and 16 each coordinate Zn(2+). Substrate-binding positions include 16 to 18 and asparagine 42; that span reads HLR. Residues lysine 100, histidine 137, and histidine 175 each coordinate Zn(2+). The residue at position 100 (lysine 100) is an N6-carboxylysine. A substrate-binding site is contributed by histidine 137. Position 220 (leucine 220) interacts with substrate. Aspartate 248 contributes to the Zn(2+) binding site. Residue aspartate 248 is part of the active site. Histidine 252 and alanine 264 together coordinate substrate.

It belongs to the metallo-dependent hydrolases superfamily. DHOase family. Class II DHOase subfamily. As to quaternary structure, homodimer. Requires Zn(2+) as cofactor.

The catalysed reaction is (S)-dihydroorotate + H2O = N-carbamoyl-L-aspartate + H(+). Its pathway is pyrimidine metabolism; UMP biosynthesis via de novo pathway; (S)-dihydroorotate from bicarbonate: step 3/3. Functionally, catalyzes the reversible cyclization of carbamoyl aspartate to dihydroorotate. The sequence is that of Dihydroorotase from Pseudomonas fluorescens (strain Pf0-1).